The primary structure comprises 42 residues: MKDFTTYLSTAPVLAAVWFGFLAGLLIEINRFFPDALSFSFV.

Residues 7-27 traverse the membrane as a helical segment; that stretch reads YLSTAPVLAAVWFGFLAGLLI.

The protein belongs to the PsaJ family.

It localises to the plastid. The protein localises to the chloroplast thylakoid membrane. In terms of biological role, may help in the organization of the PsaE and PsaF subunits. This Nephroselmis olivacea (Green alga) protein is Photosystem I reaction center subunit IX.